Here is a 38-residue protein sequence, read N- to C-terminus: Large ribosomal subunit protein bL36 (38 aa).

The protein belongs to the bacterial ribosomal protein bL36 family.

This is Large ribosomal subunit protein bL36 from Fervidobacterium nodosum (strain ATCC 35602 / DSM 5306 / Rt17-B1).